We begin with the raw amino-acid sequence, 467 residues long: H(+)/Cl(-) exchange transporter ClcA (467 aa).

The Cytoplasmic segment spans residues 1–30 (MKSQTIPTRRVRGFRRAAVIRQLLSRDKTP). A helical membrane pass occupies residues 31 to 67 (LTILLLASLTGVLAGLAGVAFEKAVAWVTAHRIEGLA). The Periplasmic portion of the chain corresponds to 68 to 74 (QVAHIPW). Residues 75-98 (LVWLLAFLFSALLAMVGYFLVRRF) traverse the membrane as a helical segment. The Cytoplasmic portion of the chain corresponds to 99–106 (APEAGGSG). The Selectivity filter part_1 signature appears at 104–108 (GSGIP). Ser105 serves as a coordination point for chloride. Residues 107–114 (IPEIEGAL) constitute an intramembrane region (helical). Residues 115 to 121 (EELRPVR) lie on the Cytoplasmic side of the membrane. Residues 122-139 (WWRVLPVKFFGGMGTLGA) traverse the membrane as a helical segment. The Periplasmic portion of the chain corresponds to 140-145 (GMVLGR). Positions 144-148 (GREGP) match the Selectivity filter part_2 motif. The chain crosses the membrane as a helical span at residues 146–164 (EGPMVQMGGNIGRMVLDIF). At 165–174 (HRPDAEARHT) the chain is on the cytoplasmic side. 2 intramembrane regions (helical) span residues 175-187 (LLAT…LAAA) and 191-199 (PLAGILFII). The Cytoplasmic portion of the chain corresponds to 200–212 (EEMRTQFHYNLIS). A helical membrane pass occupies residues 213-230 (IKAVFTGVIMSTIVFRIF). Residues 231 to 250 (NGEKSVIEVGQLTDAPVYTL) lie on the Periplasmic side of the membrane. Residues 251-279 (WLYLLLGIIFGAVGPLFNRLVLGMQDVFA) traverse the membrane as a helical segment. Topologically, residues 280 to 285 (RIHGGN) are cytoplasmic. The chain crosses the membrane as a helical span at residues 286 to 307 (TTRWVLLGGAIGGACGLLALWE). Over 308-327 (PAAAGGGFGLIPIAAAGNFT) the chain is Periplasmic. Residues 328 to 347 (VGMLLFIFIARVVTTVFCFS) traverse the membrane as a helical segment. The Cytoplasmic segment spans residues 348–352 (SGAPG). Positions 353 to 357 (GIFAP) match the Selectivity filter part_3 motif. A helical transmembrane segment spans residues 353–374 (GIFAPMLALGTLLGSAFGMACA). Residues Ile354 and Phe355 each coordinate chloride. Residues 375 to 384 (AWFPQWHLQA) are Periplasmic-facing. Positions 385 to 399 (GTFAIAGMGALLAAS) form an intramembrane region, helical. The note=Loop between two helices intramembrane region spans 400–402 (VRA). Residues 403–414 (PITGIVLVLEMT) constitute an intramembrane region (helical). An intramembrane region (note=Loop between two helices) is located at residues 415–419 (DNYQL). Residues 420 to 436 (ILPMIITCLGATLLAQF) traverse the membrane as a helical segment. Residues 437-467 (LGGKPLYSTILARTLAKQEAERQAQADGRNT) are Cytoplasmic-facing. Tyr443 provides a ligand contact to chloride.

This sequence belongs to the chloride channel (TC 2.A.49) family. ClcA subfamily. In terms of assembly, homodimer.

The protein resides in the cell inner membrane. The enzyme catalyses 2 chloride(in) + H(+)(out) = 2 chloride(out) + H(+)(in). In terms of biological role, proton-coupled chloride transporter. Functions as antiport system and exchanges two chloride ions for 1 proton. Probably acts as an electrical shunt for an outwardly-directed proton pump that is linked to amino acid decarboxylation, as part of the extreme acid resistance (XAR) response. The polypeptide is H(+)/Cl(-) exchange transporter ClcA (Cronobacter sakazakii (strain ATCC BAA-894) (Enterobacter sakazakii)).